The sequence spans 893 residues: MTAKVKDHPPLWGFGTTKTFKIPIEHLDFKYIENCSDVKQLEKILCVLRSGEEGYYPELTEFCEKRLTGLAPRSRALRKDKPAATASSFSAEEWEKIDSDLKSWVSEIKREENTRHFHDPEKHPGVEDPLPPVRGSNSCPRGGKETSSKSKTAKKRIPRDYAEWDKFDVEKECSKIDEDYKEKTVINNKAHLSKIETKIDTAGLTEKEKNFLANREKGKGNEAFYSGDYEEAVMYYTRSLSALPTATAYNNRAQAEIKLQRWSSALEDCEKALELEPGNIKALLRRATTYKHQNKFLEAVDDLRKVLQAEPDNDLAKKTLSEVERELKNSEPASELQTKGKRMVIEEVENSGDEGGKGDEDDHEDDGVDMAAMGNIQKKLMVRSQGGRRSRRARTPMPGAEQQEGQPETGTASTSDNHDLEERRAADSPGDLKSRGNELFRGGQFAEAAVQYSGAIAQLEPTGSENADELSILYSNRAACYLKEGNCRGCIQDCDRALELQPFAVKPLLRRAMAYETLEQYRSAYVDYITVLKIDCRIQLASDSVNRITRILTELDGPKWRERLPPIPAVPASEPLRVWHPAAETPDQDPCPNSCTPTITDEKMFQALKEEGNQLVKDKNYKDAISKYNECLKINSKACAIYTNRALCYLKLGQFEEAKLDCDKALQIDSKNVKASYRLELAQKGLENCRERVADPSQVVLLSPDSSEAARHLDTKNDTAPPSRERERRRIEIQEVDDSSDEEPERPAEASAVEEGWSAERAGKIEVCKPRNAYEFGQVLSTISARKDEEACAQLLVFTAPQDLPVLLSNKLEGDMLLLIMQSLKSHLVAKDPSLVCKHLLYLSKAERFEMMLALTSKDQKEQMAQLFDDLSDAQADCLTAEDIQALRRQYVL.

Positions 112-126 (ENTRHFHDPEKHPGV) are enriched in basic and acidic residues. The interval 112–155 (ENTRHFHDPEKHPGVEDPLPPVRGSNSCPRGGKETSSKSKTAKK) is disordered. 3 TPR repeats span residues 213-246 (ANRE…LPTA), 247-279 (TAYN…EPGN), and 280-313 (IKAL…EPDN). 3 disordered regions span residues 324-344 (EREL…KRMV), 349-368 (ENSG…DDGV), and 373-437 (MGNI…SRGN). Ser-351 is modified (phosphoserine). Over residues 403-415 (QEGQPETGTASTS) the composition is skewed to polar residues. Basic and acidic residues predominate over residues 416–437 (DNHDLEERRAADSPGDLKSRGN). TPR repeat units follow at residues 429 to 463 (PGDL…EPTG), 471 to 504 (SILY…QPFA), 506 to 538 (KPLL…DCRI), 605 to 638 (FQAL…NSKA), and 639 to 672 (CAIY…DSKN). A GTP-binding site is contributed by 630–637 (ECLKINSK). Ser-703 is modified (phosphoserine). Residues 704-756 (PDSSEAARHLDTKNDTAPPSRERERRRIEIQEVDDSSDEEPERPAEASAVEEG) are disordered. Basic and acidic residues predominate over residues 708–733 (EAARHLDTKNDTAPPSRERERRRIEI). Acidic residues predominate over residues 734–744 (QEVDDSSDEEP). Ser-739, Ser-740, and Ser-758 each carry phosphoserine.

In terms of tissue distribution, testis and sperm.

It localises to the cytoplasm. The protein resides in the dynein axonemal particle. May play a role in the cytoplasmic assembly of the ciliary dynein arms. Binds GTP and has GTPase activity. Plays a role in fertilization. This chain is Sperm-associated antigen 1 (Spag1), found in Rattus norvegicus (Rat).